Reading from the N-terminus, the 286-residue chain is Movement protein (286 aa).

The protein belongs to the tenuiviruses pc4 protein family. Interacts with the rice proteins DJA6 and HSP17.9A.

Its subcellular location is the host cytoplasm. In terms of biological role, transports viral genome to neighboring plant cells directly through plasmosdesmata, without any budding. The movement protein allows efficient cell to cell propagation, by bypassing the host cell wall barrier. The chain is Movement protein from Avena sativa (Oat).